We begin with the raw amino-acid sequence, 118 residues long: Fluoride-specific ion channel FluC 2 (118 aa).

The next 4 helical transmembrane spans lie at 1-21, 33-53, 55-75, and 91-111; these read MIEA…RFAI, FPLA…YIIG, GVTT…FTTF, and ISTF…FAFL. 2 residues coordinate Na(+): Gly70 and Thr73.

This sequence belongs to the fluoride channel Fluc/FEX (TC 1.A.43) family.

It localises to the cell membrane. It carries out the reaction fluoride(in) = fluoride(out). With respect to regulation, na(+) is not transported, but it plays an essential structural role and its presence is essential for fluoride channel function. In terms of biological role, fluoride-specific ion channel. Important for reducing fluoride concentration in the cell, thus reducing its toxicity. The polypeptide is Fluoride-specific ion channel FluC 2 (Bacillus cereus (strain ATCC 14579 / DSM 31 / CCUG 7414 / JCM 2152 / NBRC 15305 / NCIMB 9373 / NCTC 2599 / NRRL B-3711)).